Here is a 122-residue protein sequence, read N- to C-terminus: Large ribosomal subunit protein uL14 (122 aa).

This sequence belongs to the universal ribosomal protein uL14 family. As to quaternary structure, part of the 50S ribosomal subunit. Forms a cluster with proteins L3 and L19. In the 70S ribosome, L14 and L19 interact and together make contacts with the 16S rRNA in bridges B5 and B8.

Its function is as follows. Binds to 23S rRNA. Forms part of two intersubunit bridges in the 70S ribosome. The chain is Large ribosomal subunit protein uL14 from Listeria monocytogenes serotype 4b (strain CLIP80459).